Reading from the N-terminus, the 369-residue chain is Phosphoserine aminotransferase (369 aa).

Position 42 (R42) interacts with L-glutamate. The pyridoxal 5'-phosphate site is built by W101, T152, D176, and Q199. An N6-(pyridoxal phosphate)lysine modification is found at K200. 241 to 242 (NT) provides a ligand contact to pyridoxal 5'-phosphate.

The protein belongs to the class-V pyridoxal-phosphate-dependent aminotransferase family. SerC subfamily. In terms of assembly, homodimer. It depends on pyridoxal 5'-phosphate as a cofactor.

It is found in the cytoplasm. It carries out the reaction O-phospho-L-serine + 2-oxoglutarate = 3-phosphooxypyruvate + L-glutamate. The enzyme catalyses 4-(phosphooxy)-L-threonine + 2-oxoglutarate = (R)-3-hydroxy-2-oxo-4-phosphooxybutanoate + L-glutamate. The protein operates within amino-acid biosynthesis; L-serine biosynthesis; L-serine from 3-phospho-D-glycerate: step 2/3. Its pathway is cofactor biosynthesis; pyridoxine 5'-phosphate biosynthesis; pyridoxine 5'-phosphate from D-erythrose 4-phosphate: step 3/5. Functionally, catalyzes the reversible conversion of 3-phosphohydroxypyruvate to phosphoserine and of 3-hydroxy-2-oxo-4-phosphonooxybutanoate to phosphohydroxythreonine. This is Phosphoserine aminotransferase from Delftia acidovorans (strain DSM 14801 / SPH-1).